We begin with the raw amino-acid sequence, 45 residues long: Photosystem II reaction center protein K (45 aa).

A propeptide spanning residues 1-8 (MLMSLFLA) is cleaved from the precursor. A helical membrane pass occupies residues 23 to 43 (ILPIIPLFFLLLAFVWQAAIG).

The protein belongs to the PsbK family. As to quaternary structure, PSII is composed of 1 copy each of membrane proteins PsbA, PsbB, PsbC, PsbD, PsbE, PsbF, PsbH, PsbI, PsbJ, PsbK, PsbL, PsbM, PsbT, PsbX, PsbY, PsbZ, Psb30/Ycf12, at least 3 peripheral proteins of the oxygen-evolving complex and a large number of cofactors. It forms dimeric complexes.

The protein localises to the plastid. It localises to the cyanelle thylakoid membrane. Its function is as follows. One of the components of the core complex of photosystem II (PSII). PSII is a light-driven water:plastoquinone oxidoreductase that uses light energy to abstract electrons from H(2)O, generating O(2) and a proton gradient subsequently used for ATP formation. It consists of a core antenna complex that captures photons, and an electron transfer chain that converts photonic excitation into a charge separation. The chain is Photosystem II reaction center protein K from Cyanophora paradoxa.